Reading from the N-terminus, the 179-residue chain is Large ribosomal subunit protein uL5 (179 aa).

This sequence belongs to the universal ribosomal protein uL5 family. Part of the 50S ribosomal subunit; part of the 5S rRNA/L5/L18/L25 subcomplex. Contacts the 5S rRNA and the P site tRNA. Forms a bridge to the 30S subunit in the 70S ribosome.

This is one of the proteins that bind and probably mediate the attachment of the 5S RNA into the large ribosomal subunit, where it forms part of the central protuberance. In the 70S ribosome it contacts protein S13 of the 30S subunit (bridge B1b), connecting the 2 subunits; this bridge is implicated in subunit movement. Contacts the P site tRNA; the 5S rRNA and some of its associated proteins might help stabilize positioning of ribosome-bound tRNAs. The chain is Large ribosomal subunit protein uL5 from Staphylococcus haemolyticus (strain JCSC1435).